The following is a 1033-amino-acid chain: Putative U-box domain-containing protein 42 (1033 aa).

The disordered stretch occupies residues 145 to 226 (SQSQMTDIPD…SSNASSQRKY (82 aa)). Residues 200 to 226 (LSKSQSQSTEIPDIPSQSSNASSQRKY) show a composition bias toward polar residues. The U-box domain occupies 245–322 (PPYQAFICPL…QEWKVRNEAA (78 aa)). 5 ARM repeats span residues 483–522 (PENI…EIDI), 523–562 (GHEK…HISL), 564–608 (HPNN…NILE), 610–659 (GLEH…SLSK), and 665–704 (ATIV…ALTP).

It catalyses the reaction S-ubiquitinyl-[E2 ubiquitin-conjugating enzyme]-L-cysteine + [acceptor protein]-L-lysine = [E2 ubiquitin-conjugating enzyme]-L-cysteine + N(6)-ubiquitinyl-[acceptor protein]-L-lysine.. Its pathway is protein modification; protein ubiquitination. Functionally, functions as an E3 ubiquitin ligase. In Arabidopsis thaliana (Mouse-ear cress), this protein is Putative U-box domain-containing protein 42 (PUB42).